A 337-amino-acid chain; its full sequence is Protein SphX (337 aa).

The N-terminal stretch at 1 to 30 is a signal peptide; sequence MTTLKPALRRAAVLLPIAAVASSLFPIQEA.

The protein belongs to the PstS family. In terms of processing, the N-terminus is blocked.

It is found in the cell inner membrane. May be involved in the system for phosphate transport across the cytoplasmic membrane. In Synechococcus elongatus (strain ATCC 33912 / PCC 7942 / FACHB-805) (Anacystis nidulans R2), this protein is Protein SphX (sphX).